The following is a 746-amino-acid chain: Iron-sulfur clusters transporter ABCB7, mitochondrial (746 aa).

The transit peptide at 1-19 (MAPMLVSLNCGIRVQRRTL) directs the protein to the mitochondrion. The Mitochondrial matrix segment spans residues 20–133 (TLLIRQTSSY…KDRPDLRARV (114 aa)). An ABC transmembrane type-1 domain is found at 133 to 429 (VAVSLGLLAG…LGTVYRETRQ (297 aa)). A helical transmembrane segment spans residues 134–154 (AVSLGLLAGAKLTNVMVPFMF). The Mitochondrial intermembrane segment spans residues 155–176 (KYAVDELNQMSGHMLNLNDAPS). Residues 177-199 (TVATMTTAVLIGYGVSRAGSALF) form a helical membrane-spanning segment. Topologically, residues 200-252 (NELRNTVFGKVAQSSIRRIAKNVFLHLHNLDLGFHLSRQTGALSKAIDRGTRG) are mitochondrial matrix. A helical transmembrane segment spans residues 253–273 (ISFVLSALVFNLGPTVFEMFL). At 274–283 (VSAILYYKCG) the chain is on the mitochondrial intermembrane side. Residues 284–304 (GEFAAVALGTLSAYTIFTILV) form a helical membrane-spanning segment. The Mitochondrial matrix portion of the chain corresponds to 305–375 (TQWRTRFRIE…TLAMLNFGQS (71 aa)). Glutathione-binding positions include 308–312 (RTRFR) and 371–374 (NFGQ). The helical transmembrane segment at 376–396 (AIFSVGLTAIMLLASKGIAAG) threads the bilayer. At 397 to 402 (NMTVGD) the chain is on the mitochondrial intermembrane side. Residues 403–423 (LVMVNGLLFQLSLPLNFLGTV) form a helical membrane-spanning segment. G421 lines the glutathione pocket. Topologically, residues 424–746 (YRETRQALID…SVKGCGNCSC (323 aa)) are mitochondrial matrix. Residues 465 to 699 (IRFEDVYFEY…PGSLYAELWN (235 aa)) form the ABC transporter domain. ATP is bound by residues Y474 and 498–505 (GGSGSGKS). Positions 708-728 (SRKSSSAPAAERLSQKEEERK) are disordered.

Belongs to the ABC transporter superfamily. ABCB family. Heavy Metal importer (TC 3.A.1.210) subfamily. Homodimer.

It localises to the mitochondrion inner membrane. The protein localises to the mitochondrion. The catalysed reaction is (glutathione)4[2Fe(III)-2S] cluster(in) + ATP + H2O = (glutathione)4[2Fe(III)-2S] cluster(out) + ADP + phosphate + H(+). Exports glutathione-coordinated iron-sulfur clusters such as [2Fe-2S]-(GS)4 cluster from the mitochondria to the cytosol in an ATP-dependent manner allowing the assembly of the cytosolic iron-sulfur (Fe/S) cluster-containing proteins and participates in iron homeostasis. May play a role in iron and lipid metabolism. This chain is Iron-sulfur clusters transporter ABCB7, mitochondrial, found in Oryzias latipes (Japanese rice fish).